Consider the following 142-residue polypeptide: Large ribosomal subunit protein uL11 (142 aa).

The protein belongs to the universal ribosomal protein uL11 family. In terms of assembly, part of the ribosomal stalk of the 50S ribosomal subunit. Interacts with L10 and the large rRNA to form the base of the stalk. L10 forms an elongated spine to which L12 dimers bind in a sequential fashion forming a multimeric L10(L12)X complex. Post-translationally, one or more lysine residues are methylated.

Functionally, forms part of the ribosomal stalk which helps the ribosome interact with GTP-bound translation factors. This chain is Large ribosomal subunit protein uL11, found in Parvibaculum lavamentivorans (strain DS-1 / DSM 13023 / NCIMB 13966).